Reading from the N-terminus, the 589-residue chain is Aspartate--tRNA ligase 2 (589 aa).

Glu-174 is a binding site for L-aspartate. The aspartate stretch occupies residues 198–201; that stretch reads QITK. Arg-220 provides a ligand contact to L-aspartate. ATP is bound by residues 220–222 and Gln-229; that span reads RDE. His-443 contributes to the L-aspartate binding site. Residue Glu-477 coordinates ATP. Arg-484 contacts L-aspartate. Position 529-532 (529-532) interacts with ATP; it reads GLDR.

This sequence belongs to the class-II aminoacyl-tRNA synthetase family. Type 1 subfamily. As to quaternary structure, homodimer.

It localises to the cytoplasm. The enzyme catalyses tRNA(Asp) + L-aspartate + ATP = L-aspartyl-tRNA(Asp) + AMP + diphosphate. Its function is as follows. Catalyzes the attachment of L-aspartate to tRNA(Asp) in a two-step reaction: L-aspartate is first activated by ATP to form Asp-AMP and then transferred to the acceptor end of tRNA(Asp). The sequence is that of Aspartate--tRNA ligase 2 from Streptococcus mutans serotype c (strain ATCC 700610 / UA159).